Consider the following 444-residue polypeptide: Alanyl-tRNA editing protein Aarsd1 (444 aa).

2 residues coordinate Zn(2+): H109 and H113. S174 is modified (phosphoserine). 2 residues coordinate Zn(2+): C209 and H213.

The protein belongs to the class-II aminoacyl-tRNA synthetase family. Alax-L subfamily. The cofactor is Zn(2+).

The protein resides in the cytoplasm. Functionally, functions in trans to edit the amino acid moiety from incorrectly charged tRNA(Ala). The chain is Alanyl-tRNA editing protein Aarsd1 (AARSD1) from Bos taurus (Bovine).